Reading from the N-terminus, the 238-residue chain is MERGAPFSHYQLPKSISELNLDQHSNNPTPMTSSVVVAGAGDKNNGIVVQQQPPCVAREQDQYMPIANVIRIMRKTLPSHAKISDDAKETIQECVSEYISFVTGEANERCQREQRKTITAEDILWAMSKLGFDNYVDPLTVFINRYREIETDRGSALRGEPPSLRQTYGGNGIGFHGPSHGLPPPGPYGYGMLDQSMVMGGGRYYQNGSSGQDESSVGGGSSSSINGMPAFDHYGQYK.

Residues 64–70 mediate DNA binding; that stretch reads MPIANVI. The tract at residues 91-102 is subunit association domain (SAD); that stretch reads IQECVSEYISFV. Positions 203 to 238 are disordered; it reads RYYQNGSSGQDESSVGGGSSSSINGMPAFDHYGQYK. Low complexity predominate over residues 208 to 227; sequence GSSGQDESSVGGGSSSSING.

It belongs to the NFYB/HAP3 subunit family. In terms of assembly, heterotrimeric transcription factor composed of three components, NF-YA, NF-YB and NF-YC. NF-YB and NF-YC must interact and dimerize for NF-YA association and DNA binding. Interacts with PRN1. Expressed in green siliques. Present in etiolated seedlings.

The protein localises to the nucleus. Functionally, component of the NF-Y/HAP transcription factor complex. The NF-Y complex stimulates the transcription of various genes by recognizing and binding to a CCAAT motif in promoters. Acts as a central regulator of the embryogenesis. Required for the speciation of cotyledon identity and the completion of embryo maturation. Controls seed storage protein genes through the regulation of FUS3 and ABI3. Involved in the blue light (BL) and abscisic acid (ABA) signaling pathways. The chain is Nuclear transcription factor Y subunit B-9 (NFYB9) from Arabidopsis thaliana (Mouse-ear cress).